The chain runs to 117 residues: Photosystem II reaction center Psb28 protein (117 aa).

This sequence belongs to the Psb28 family. As to quaternary structure, part of the photosystem II complex.

The protein localises to the cellular thylakoid membrane. This Prochlorococcus marinus (strain MIT 9515) protein is Photosystem II reaction center Psb28 protein.